The primary structure comprises 527 residues: GMP synthase [glutamine-hydrolyzing] (527 aa).

Residues 4–202 (KILILDFGSQ…VLQICGARAD (199 aa)) form the Glutamine amidotransferase type-1 domain. The active-site Nucleophile is Cys-81. Residues His-176 and Glu-178 contribute to the active site. The GMPS ATP-PPase domain occupies 203–395 (WEMGNYIDEA…LGLPPAMVYR (193 aa)). Position 230-236 (230-236 (SGGVDSS)) interacts with ATP.

As to quaternary structure, homodimer.

The catalysed reaction is XMP + L-glutamine + ATP + H2O = GMP + L-glutamate + AMP + diphosphate + 2 H(+). Its pathway is purine metabolism; GMP biosynthesis; GMP from XMP (L-Gln route): step 1/1. Catalyzes the synthesis of GMP from XMP. This chain is GMP synthase [glutamine-hydrolyzing], found in Paraburkholderia phytofirmans (strain DSM 17436 / LMG 22146 / PsJN) (Burkholderia phytofirmans).